The primary structure comprises 238 residues: Ditrans,polycis-undecaprenyl-diphosphate synthase ((2E,6E)-farnesyl-diphosphate specific) (238 aa).

D14 is a catalytic residue. Residue D14 participates in Mg(2+) binding. Residues 15–18, W19, R27, H31, and 59–61 each bind substrate; these read GNGR and SSE. The Proton acceptor role is filled by N62. Substrate contacts are provided by residues W63, R65, R182, and 188–190; that span reads RIS. E201 serves as a coordination point for Mg(2+).

This sequence belongs to the UPP synthase family. In terms of assembly, homodimer. Mg(2+) serves as cofactor.

The catalysed reaction is 8 isopentenyl diphosphate + (2E,6E)-farnesyl diphosphate = di-trans,octa-cis-undecaprenyl diphosphate + 8 diphosphate. Its function is as follows. Catalyzes the sequential condensation of isopentenyl diphosphate (IPP) with (2E,6E)-farnesyl diphosphate (E,E-FPP) to yield (2Z,6Z,10Z,14Z,18Z,22Z,26Z,30Z,34E,38E)-undecaprenyl diphosphate (di-trans,octa-cis-UPP). UPP is the precursor of glycosyl carrier lipid in the biosynthesis of bacterial cell wall polysaccharide components such as peptidoglycan and lipopolysaccharide. In Legionella pneumophila (strain Paris), this protein is Ditrans,polycis-undecaprenyl-diphosphate synthase ((2E,6E)-farnesyl-diphosphate specific).